A 209-amino-acid polypeptide reads, in one-letter code: tRNA (guanine-N(7)-)-methyltransferase (209 aa).

S-adenosyl-L-methionine contacts are provided by D35, E60, N87, and D113. D113 is an active-site residue. Substrate is bound by residues K117 and D149.

The protein belongs to the class I-like SAM-binding methyltransferase superfamily. TrmB family.

The catalysed reaction is guanosine(46) in tRNA + S-adenosyl-L-methionine = N(7)-methylguanosine(46) in tRNA + S-adenosyl-L-homocysteine. The protein operates within tRNA modification; N(7)-methylguanine-tRNA biosynthesis. In terms of biological role, catalyzes the formation of N(7)-methylguanine at position 46 (m7G46) in tRNA. In Prochlorococcus marinus (strain MIT 9215), this protein is tRNA (guanine-N(7)-)-methyltransferase.